Reading from the N-terminus, the 478-residue chain is Divinyl ether synthase CYP74D3 (478 aa).

Cys432 provides a ligand contact to heme.

Belongs to the cytochrome P450 family. 9-divinyl ether synthase subfamily. As to expression, not detected in leaves, stems or roots of healthy plants.

The protein resides in the cytoplasm. It is found in the cytosol. It carries out the reaction (9S)-hydroperoxy-(10E,12Z)-octadecadienoate = colneleate + H2O. The enzyme catalyses (9S)-hydroperoxy-(10E,12Z,15Z)-octadecatrienoate = colnelenate + H2O. Strictly inducible cytochrome P450 involved in the biosynthesis of the anti-fungal toxins colneleate and colnelenate. Can use (9S)-hydroperoxy-(10E,12Z)-octadecadienoate (9-HPOD) and (9S)-hydroperoxy-(10E,12Z,15Z)-octadecatrienoate (9-HPOT) as substrates, but has a very low activity with the corresponding 13-hydroperoxides (13-HPOD and 13-POT). The chain is Divinyl ether synthase CYP74D3 from Nicotiana tabacum (Common tobacco).